A 147-amino-acid polypeptide reads, in one-letter code: Acidic phospholipase A2 1 (147 aa).

The N-terminal stretch at 1 to 19 (MNPAHLLVLAAVCVSLLGA) is a signal peptide. Residues 20–27 (AIVPPQPL) constitute a propeptide that is removed on maturation. Disulfide bonds link C38/C99, C54/C146, C56/C72, C71/C127, C78/C120, C88/C113, and C106/C118. Residues Y55, G57, and G59 each contribute to the Ca(2+) site. Residue H75 is part of the active site. D76 is a Ca(2+) binding site. The active site involves D121.

This sequence belongs to the phospholipase A2 family. Group I subfamily. D49 sub-subfamily. Ca(2+) serves as cofactor. As to expression, expressed by the venom gland.

It is found in the secreted. The enzyme catalyses a 1,2-diacyl-sn-glycero-3-phosphocholine + H2O = a 1-acyl-sn-glycero-3-phosphocholine + a fatty acid + H(+). Functionally, PLA2 catalyzes the calcium-dependent hydrolysis of the 2-acyl groups in 3-sn-phosphoglycerides. This Bungarus flaviceps flaviceps (Red-headed krait) protein is Acidic phospholipase A2 1.